The following is a 294-amino-acid chain: Cyclin-G1 (294 aa).

It belongs to the cyclin family. Cyclin G subfamily.

It is found in the nucleus. May play a role in growth regulation. Is associated with G2/M phase arrest in response to DNA damage. May be an intermediate by which p53 mediates its role as an inhibitor of cellular proliferation. The chain is Cyclin-G1 (Ccng1) from Rattus norvegicus (Rat).